The following is a 216-amino-acid chain: DNA gyrase subunit B (216 aa).

In terms of domain architecture, Toprim spans 140 to 216 (SELYLVEGDS…PDKLRYHKII (77 aa)).

Belongs to the type II topoisomerase GyrB family. In terms of assembly, heterotetramer, composed of two GyrA and two GyrB chains. In the heterotetramer, GyrA contains the active site tyrosine that forms a transient covalent intermediate with DNA, while GyrB binds cofactors and catalyzes ATP hydrolysis.

It localises to the cytoplasm. The enzyme catalyses ATP-dependent breakage, passage and rejoining of double-stranded DNA.. Functionally, a type II topoisomerase that negatively supercoils closed circular double-stranded (ds) DNA in an ATP-dependent manner to modulate DNA topology and maintain chromosomes in an underwound state. Negative supercoiling favors strand separation, and DNA replication, transcription, recombination and repair, all of which involve strand separation. Also able to catalyze the interconversion of other topological isomers of dsDNA rings, including catenanes and knotted rings. Type II topoisomerases break and join 2 DNA strands simultaneously in an ATP-dependent manner. The chain is DNA gyrase subunit B (gyrB) from Acinetobacter venetianus (strain ATCC 31012 / DSM 23050 / BCRC 14357 / CCUG 45561 / CIP 110063 / KCTC 2702 / LMG 19082 / RAG-1).